The primary structure comprises 344 residues: Arginine N-succinyltransferase (344 aa).

L125 is a succinyl-CoA binding site. H229 serves as the catalytic Proton donor.

It belongs to the arginine N-succinyltransferase family.

The enzyme catalyses succinyl-CoA + L-arginine = N(2)-succinyl-L-arginine + CoA + H(+). It participates in amino-acid degradation; L-arginine degradation via AST pathway; L-glutamate and succinate from L-arginine: step 1/5. Its function is as follows. Catalyzes the transfer of succinyl-CoA to arginine to produce N(2)-succinylarginine. This Escherichia fergusonii (strain ATCC 35469 / DSM 13698 / CCUG 18766 / IAM 14443 / JCM 21226 / LMG 7866 / NBRC 102419 / NCTC 12128 / CDC 0568-73) protein is Arginine N-succinyltransferase.